A 185-amino-acid chain; its full sequence is Ribosome-recycling factor (185 aa).

This sequence belongs to the RRF family.

The protein resides in the cytoplasm. Functionally, responsible for the release of ribosomes from messenger RNA at the termination of protein biosynthesis. May increase the efficiency of translation by recycling ribosomes from one round of translation to another. This chain is Ribosome-recycling factor, found in Geotalea daltonii (strain DSM 22248 / JCM 15807 / FRC-32) (Geobacter daltonii).